The sequence spans 351 residues: Flap endonuclease 1 (351 aa).

The segment at 1 to 98 (MDLAELVEEI…QELERRKKVK (98 aa)) is N-domain. Mg(2+)-binding residues include D27, D80, E154, E156, D175, D177, and D238. The interval 118–260 (ELKKYAQMSI…TAYRIIKKYG (143 aa)) is I-domain. Residues 343 to 351 (RQTGLDQWF) are interaction with PCNA.

This sequence belongs to the XPG/RAD2 endonuclease family. FEN1 subfamily. Interacts with PCNA. PCNA stimulates the nuclease activity without altering cleavage specificity. It depends on Mg(2+) as a cofactor.

Functionally, structure-specific nuclease with 5'-flap endonuclease and 5'-3' exonuclease activities involved in DNA replication and repair. During DNA replication, cleaves the 5'-overhanging flap structure that is generated by displacement synthesis when DNA polymerase encounters the 5'-end of a downstream Okazaki fragment. Binds the unpaired 3'-DNA end and kinks the DNA to facilitate 5' cleavage specificity. Cleaves one nucleotide into the double-stranded DNA from the junction in flap DNA, leaving a nick for ligation. Also involved in the base excision repair (BER) pathway. Acts as a genome stabilization factor that prevents flaps from equilibrating into structures that lead to duplications and deletions. Also possesses 5'-3' exonuclease activity on nicked or gapped double-stranded DNA. In Sulfurisphaera tokodaii (strain DSM 16993 / JCM 10545 / NBRC 100140 / 7) (Sulfolobus tokodaii), this protein is Flap endonuclease 1.